The primary structure comprises 69 residues: Putative membrane protein insertion efficiency factor (69 aa).

It belongs to the UPF0161 family.

It is found in the cell inner membrane. Functionally, could be involved in insertion of integral membrane proteins into the membrane. In Aromatoleum aromaticum (strain DSM 19018 / LMG 30748 / EbN1) (Azoarcus sp. (strain EbN1)), this protein is Putative membrane protein insertion efficiency factor.